Reading from the N-terminus, the 552-residue chain is 5'-AMP-activated protein kinase catalytic subunit alpha-2 (552 aa).

The 253-residue stretch at 16-268 (YVLGDTLGVG…IKDIREHEWF (253 aa)) folds into the Protein kinase domain. Residues 22–30 (LGVGTFGKV) and Lys45 contribute to the ATP site. Asp139 serves as the catalytic Proton acceptor. Thr172 bears the Phosphothreonine; by LKB1 and CaMKK2 mark. The residue at position 258 (Thr258) is a Phosphothreonine. Residues 291 to 376 (EAVKEVCEKF…PERMPPLIAD (86 aa)) are AIS. The residue at position 377 (Ser377) is a Phosphoserine. Residues 478–519 (EQRSGSSTPQRSCSAAGLHRPRSSLDSVTAESHSLSGSLSGS) form a disordered region. Over residues 480–490 (RSGSSTPQRSC) the composition is skewed to polar residues. A Phosphoserine modification is found at Ser491. Over residues 509–519 (SHSLSGSLSGS) the composition is skewed to low complexity.

This sequence belongs to the protein kinase superfamily. CAMK Ser/Thr protein kinase family. SNF1 subfamily. AMPK is a heterotrimer of an alpha catalytic subunit (PRKAA1 or PRKAA2), a beta (PRKAB1 or PRKAB2) and a gamma non-catalytic subunits (PRKAG1, PRKAG2 or PRKAG3). Interacts with FNIP1 and FNIP2. Interacts with DUSP29. Interacts with ARF6. The phosphorylated form at Thr-172 mediated by CamKK2 interacts with ACSS2. It depends on Mg(2+) as a cofactor. In terms of processing, ubiquitinated. Phosphorylated at Thr-172 by STK11/LKB1 in complex with STE20-related adapter-alpha (STRADA) pseudo kinase and CAB39. Also phosphorylated at Thr-172 by CAMKK2; triggered by a rise in intracellular calcium ions, without detectable changes in the AMP/ATP ratio. CAMKK1 can also phosphorylate Thr-172, but at much lower level. Dephosphorylated by protein phosphatase 2A and 2C (PP2A and PP2C). Phosphorylated by ULK1; leading to negatively regulate AMPK activity and suggesting the existence of a regulatory feedback loop between ULK1 and AMPK. Dephosphorylated by PPM1A and PPM1B at Thr-172 (mediated by STK11/LKB1).

The protein resides in the cytoplasm. It is found in the nucleus. The catalysed reaction is L-seryl-[protein] + ATP = O-phospho-L-seryl-[protein] + ADP + H(+). The enzyme catalyses L-threonyl-[protein] + ATP = O-phospho-L-threonyl-[protein] + ADP + H(+). It carries out the reaction L-seryl-[acetyl-CoA carboxylase] + ATP = O-phospho-L-seryl-[acetyl-CoA carboxylase] + ADP + H(+). It catalyses the reaction L-seryl-[3-hydroxy-3-methylglutaryl-coenzyme A reductase] + ATP = O-phospho-L-seryl-[3-hydroxy-3-methylglutaryl-coenzyme A reductase] + ADP + H(+). Activated by phosphorylation on Thr-172. Binding of AMP to non-catalytic gamma subunit (PRKAG1, PRKAG2 or PRKAG3) results in allosteric activation, inducing phosphorylation on Thr-172. AMP-binding to gamma subunit also sustains activity by preventing dephosphorylation of Thr-172. ADP also stimulates Thr-172 phosphorylation, without stimulating already phosphorylated AMPK. ATP promotes dephosphorylation of Thr-172, rendering the enzyme inactive. Under physiological conditions AMPK mainly exists in its inactive form in complex with ATP, which is much more abundant than AMP. Selectively inhibited by compound C (6-[4-(2-Piperidin-1-yl-ethoxy)-phenyl)]-3-pyridin-4-yl-pyyrazolo[1,5-a] pyrimidine. Activated by resveratrol, a natural polyphenol present in red wine, and S17834, a synthetic polyphenol. Salicylate/aspirin directly activates kinase activity, primarily by inhibiting Thr-172 dephosphorylation. In terms of biological role, catalytic subunit of AMP-activated protein kinase (AMPK), an energy sensor protein kinase that plays a key role in regulating cellular energy metabolism. In response to reduction of intracellular ATP levels, AMPK activates energy-producing pathways and inhibits energy-consuming processes: inhibits protein, carbohydrate and lipid biosynthesis, as well as cell growth and proliferation. AMPK acts via direct phosphorylation of metabolic enzymes, and by longer-term effects via phosphorylation of transcription regulators. Regulates lipid synthesis by phosphorylating and inactivating lipid metabolic enzymes such as ACACA, ACACB, GYS1, HMGCR and LIPE; regulates fatty acid and cholesterol synthesis by phosphorylating acetyl-CoA carboxylase (ACACA and ACACB) and hormone-sensitive lipase (LIPE) enzymes, respectively. Promotes lipolysis of lipid droplets by mediating phosphorylation of isoform 1 of CHKA (CHKalpha2). Regulates insulin-signaling and glycolysis by phosphorylating IRS1, PFKFB2 and PFKFB3. Involved in insulin receptor/INSR internalization. AMPK stimulates glucose uptake in muscle by increasing the translocation of the glucose transporter SLC2A4/GLUT4 to the plasma membrane, possibly by mediating phosphorylation of TBC1D4/AS160. Regulates transcription and chromatin structure by phosphorylating transcription regulators involved in energy metabolism such as CRTC2/TORC2, FOXO3, histone H2B, HDAC5, MEF2C, MLXIPL/ChREBP, EP300, HNF4A, p53/TP53, SREBF1, SREBF2 and PPARGC1A. Acts as a key regulator of glucose homeostasis in liver by phosphorylating CRTC2/TORC2, leading to CRTC2/TORC2 sequestration in the cytoplasm. In response to stress, phosphorylates 'Ser-36' of histone H2B (H2BS36ph), leading to promote transcription. Acts as a key regulator of cell growth and proliferation by phosphorylating FNIP1, TSC2, RPTOR, WDR24 and ATG1/ULK1: in response to nutrient limitation, negatively regulates the mTORC1 complex by phosphorylating RPTOR component of the mTORC1 complex and by phosphorylating and activating TSC2. Also phosphorylates and inhibits GATOR2 subunit WDR24 in response to nutrient limitation, leading to suppress glucose-mediated mTORC1 activation. In response to energetic stress, phosphorylates FNIP1, inactivating the non-canonical mTORC1 signaling, thereby promoting nuclear translocation of TFEB and TFE3, and inducing transcription of lysosomal or autophagy genes. In response to nutrient limitation, promotes autophagy by phosphorylating and activating ATG1/ULK1. In that process also activates WDR45/WIPI4. Phosphorylates CASP6, thereby preventing its autoprocessing and subsequent activation. AMPK also acts as a regulator of circadian rhythm by mediating phosphorylation of CRY1, leading to destabilize it. May regulate the Wnt signaling pathway by phosphorylating CTNNB1, leading to stabilize it. Also acts as a regulator of cellular polarity by remodeling the actin cytoskeleton; probably by indirectly activating myosin. Also phosphorylates CFTR, EEF2K, KLC1, NOS3 and SLC12A1. Plays an important role in the differential regulation of pro-autophagy (composed of PIK3C3, BECN1, PIK3R4 and UVRAG or ATG14) and non-autophagy (composed of PIK3C3, BECN1 and PIK3R4) complexes, in response to glucose starvation. Can inhibit the non-autophagy complex by phosphorylating PIK3C3 and can activate the pro-autophagy complex by phosphorylating BECN1. Upon glucose starvation, promotes ARF6 activation in a kinase-independent manner leading to cell migration. Upon glucose deprivation mediates the phosphorylation of ACSS2 at 'Ser-659', which exposes the nuclear localization signal of ACSS2, required for its interaction with KPNA1 and nuclear translocation. Upon stress, regulates mitochondrial fragmentation through phosphorylation of MTFR1L. The protein is 5'-AMP-activated protein kinase catalytic subunit alpha-2 (PRKAA2) of Sus scrofa (Pig).